Reading from the N-terminus, the 236-residue chain is tRNA (guanine-N(7)-)-methyltransferase (236 aa).

S-adenosyl-L-methionine is bound by residues G54, 77–78 (EI), 110–111 (NA), and L130. D133 is a catalytic residue. 208 to 210 (TEE) serves as a coordination point for S-adenosyl-L-methionine.

It belongs to the class I-like SAM-binding methyltransferase superfamily. TrmB family.

The protein localises to the nucleus. The catalysed reaction is guanosine(46) in tRNA + S-adenosyl-L-methionine = N(7)-methylguanosine(46) in tRNA + S-adenosyl-L-homocysteine. Its pathway is tRNA modification; N(7)-methylguanine-tRNA biosynthesis. Catalyzes the formation of N(7)-methylguanine at position 46 (m7G46) in tRNA. This chain is tRNA (guanine-N(7)-)-methyltransferase, found in Bombyx mori (Silk moth).